A 244-amino-acid chain; its full sequence is Ethylene-responsive transcription factor 1 (244 aa).

The segment at residues 106–164 is a DNA-binding region (AP2/ERF); the sequence is HYRGVRQRPWGKFAAEIRDPAKNGARVWLGTYESAEEAALAYGKAAFRMRGTKALLNFP. Over residues 186–198 the composition is skewed to low complexity; the sequence is SASSSVSSASESG. Positions 186–214 are disordered; that stretch reads SASSSVSSASESGSPKRRRKGVAAKQAEL.

The protein belongs to the ethylene-response factor family. Class 1 subfamily. Present in stems.

It is found in the nucleus. In terms of biological role, involved in the regulation of gene expression during fruit ripening, by stress factors and by components of stress signal transduction pathways. Transcription factor that binds to the GCC-box pathogenesis-related promoter element. Probably acts as a transcriptional activator and may be involved in disease resistance pathways. This Solanum lycopersicum (Tomato) protein is Ethylene-responsive transcription factor 1 (ERF1).